The following is a 1200-amino-acid chain: Chromosome partition protein Smc (1200 aa).

32–39 lines the ATP pocket; sequence PNGCGKSN. Coiled-coil stretches lie at residues 171-219 and 252-342; these read VTKY…AEKY and LENL…MSEA. Residues 528–644 enclose the SMC hinge domain; the sequence is QGIFGLVADV…QDVATARAWT (117 aa). Coiled coils occupy residues 679–706 and 735–762; these read ALQK…ILTR and LASQ…LEVE. Positions 763 to 795 are disordered; sequence EGQLTQSHQALEHEEEASRGEVAHGQADREGRE. Residues 772–795 show a composition bias toward basic and acidic residues; sequence ALEHEEEASRGEVAHGQADREGRE. Residues 1002–1039 are a coiled coil; sequence HAELSKRYDFLTAQKKDLQSSIEQLKEAIQRIDATSRE.

It belongs to the SMC family. As to quaternary structure, homodimer. Probably forms the Structural Maintenance of Chromosome (SMC) condensin-like complex with ScpA and ScpB.

The protein localises to the cytoplasm. Functionally, a conditionally essential component of the chromosome segregation machinery. Required for chromosome condensation and partitioning. Important for positioning of ParB-parS complexes (ori of replication) and of the ter replication site, as well as for segration of the ParB-parS complex and thus chromosome segregation. May act via the formation of a condensin-like complex containing Smc, ScpA and ScpB that pulls DNA away from mid-cell into both cell halves. The protein is Chromosome partition protein Smc of Myxococcus xanthus (strain DK1622).